Consider the following 89-residue polypeptide: Small ribosomal subunit protein uS15 (89 aa).

It belongs to the universal ribosomal protein uS15 family. Part of the 30S ribosomal subunit. Forms a bridge to the 50S subunit in the 70S ribosome, contacting the 23S rRNA.

Its function is as follows. One of the primary rRNA binding proteins, it binds directly to 16S rRNA where it helps nucleate assembly of the platform of the 30S subunit by binding and bridging several RNA helices of the 16S rRNA. In terms of biological role, forms an intersubunit bridge (bridge B4) with the 23S rRNA of the 50S subunit in the ribosome. The chain is Small ribosomal subunit protein uS15 from Lactobacillus helveticus (strain DPC 4571).